Here is a 583-residue protein sequence, read N- to C-terminus: CD166 antigen (583 aa).

Positions 1–27 (MESKGASSCRLLFCLLISATVFRPGLG) are cleaved as a signal peptide. Ig-like V-type domains are found at residues 28-120 (WYTV…TEDN) and 125-234 (PTIV…KTIH). Over 28-527 (WYTVNSAYGD…NREKVNDQAK (500 aa)) the chain is Extracellular. Disulfide bonds link Cys-43/Cys-113 and Cys-157/Cys-220. Residues Asn-91, Asn-95, Asn-167, Asn-265, Asn-306, Asn-361, Asn-457, Asn-480, and Asn-499 are each glycosylated (N-linked (GlcNAc...) asparagine). Ig-like C2-type domains follow at residues 245-328 (PTEQ…TAIT), 333-409 (DLSL…ESLT), and 416-501 (PQIK…LNVS). 3 cysteine pairs are disulfide-bonded: Cys-270/Cys-313, Cys-354/Cys-392, and Cys-435/Cys-485. The chain crosses the membrane as a helical span at residues 528 to 549 (LIVGIVVGLLLAALVAGVVYWL). The Cytoplasmic segment spans residues 550–583 (YMKKSKTASKHVNKDLGNMEENKKLEENNHKTEA). The segment at 562 to 583 (NKDLGNMEENKKLEENNHKTEA) is disordered. A compositionally biased stretch (basic and acidic residues) spans 569-583 (EENKKLEENNHKTEA).

In terms of assembly, homodimer. Interacts (via extracellular domain) with CD6 (via extracellular domain). Homodimerization and interaction with CD6 involve the same region and cannot occur simultaneously. The affinity for CD6 is much higher than the affinity for self-association. Interacts (via glycosylated extracellular domain) with LGALS1 and LGALS3. Interaction with LGALS1 or LGALS3 inhibits interaction with CD6. Glycosylated. As to expression, detected on hematopoietic stem cells derived from umbilical cord blood. Detected on lymph vessel endothelial cells, skin and tonsil. Detected on peripheral blood monocytes. Detected on monocyte-derived dendritic cells (at protein level). Detected at low levels in spleen, placenta, liver. Expressed by activated T-cells, B-cells, monocytes and thymic epithelial cells. Isoform 1 and isoform 3 are detected in vein and artery endothelial cells, astrocytes, keratinocytes and artery smooth muscle cells. Expressed by neurons in the brain. Restricted expression in tumor cell lines. Detected in highly metastasizing melanoma cell lines.

The protein resides in the cell membrane. It localises to the cell projection. It is found in the axon. The protein localises to the dendrite. Its subcellular location is the secreted. Functionally, cell adhesion molecule that mediates both heterotypic cell-cell contacts via its interaction with CD6, as well as homotypic cell-cell contacts. Promotes T-cell activation and proliferation via its interactions with CD6. Contributes to the formation and maturation of the immunological synapse via its interactions with CD6. Mediates homotypic interactions with cells that express ALCAM. Acts as a ligand for the LILRB4 receptor, enhancing LILRB4-mediated inhibition of T cell proliferation. Required for normal hematopoietic stem cell engraftment in the bone marrow. Mediates attachment of dendritic cells onto endothelial cells via homotypic interaction. Inhibits endothelial cell migration and promotes endothelial tube formation via homotypic interactions. Required for normal organization of the lymph vessel network. Required for normal hematopoietic stem cell engraftment in the bone marrow. Plays a role in hematopoiesis; required for normal numbers of hematopoietic stem cells in bone marrow. Promotes in vitro osteoblast proliferation and differentiation. Promotes neurite extension, axon growth and axon guidance; axons grow preferentially on surfaces that contain ALCAM. Mediates outgrowth and pathfinding for retinal ganglion cell axons. Its function is as follows. Inhibits activities of membrane-bound isoforms by competing for the same interaction partners. Inhibits cell attachment via homotypic interactions. Promotes endothelial cell migration. Inhibits endothelial cell tube formation. The polypeptide is CD166 antigen (ALCAM) (Homo sapiens (Human)).